Reading from the N-terminus, the 536-residue chain is L-aspartate oxidase 2 (536 aa).

Residues 22 to 25 (EGLA) and 51 to 58 (SSYWAQGG) each bind FAD. Arg284 serves as the catalytic Proton donor/acceptor. FAD is bound by residues Glu369 and 385-386 (SL).

The protein belongs to the FAD-dependent oxidoreductase 2 family. NadB subfamily. FAD is required as a cofactor.

It localises to the cytoplasm. The catalysed reaction is L-aspartate + O2 = iminosuccinate + H2O2. It participates in cofactor biosynthesis; NAD(+) biosynthesis; iminoaspartate from L-aspartate (oxidase route): step 1/1. Its function is as follows. Catalyzes the oxidation of L-aspartate to iminoaspartate, the first step in the de novo biosynthesis of NAD(+). The polypeptide is L-aspartate oxidase 2 (nadB2) (Ralstonia nicotianae (strain ATCC BAA-1114 / GMI1000) (Ralstonia solanacearum)).